The sequence spans 363 residues: Probable dual-specificity RNA methyltransferase RlmN (363 aa).

The active-site Proton acceptor is Glu99. Residues 105–341 (SENRMTACVS…VTVRKSHGAS (237 aa)) form the Radical SAM core domain. Residues Cys112 and Cys346 are joined by a disulfide bond. [4Fe-4S] cluster-binding residues include Cys119, Cys123, and Cys126. Residues 171–172 (GE), Ser204, 227–229 (SLH), and Asn303 each bind S-adenosyl-L-methionine. Cys346 (S-methylcysteine intermediate) is an active-site residue.

It belongs to the radical SAM superfamily. RlmN family. The cofactor is [4Fe-4S] cluster.

Its subcellular location is the cytoplasm. The enzyme catalyses adenosine(2503) in 23S rRNA + 2 reduced [2Fe-2S]-[ferredoxin] + 2 S-adenosyl-L-methionine = 2-methyladenosine(2503) in 23S rRNA + 5'-deoxyadenosine + L-methionine + 2 oxidized [2Fe-2S]-[ferredoxin] + S-adenosyl-L-homocysteine. It carries out the reaction adenosine(37) in tRNA + 2 reduced [2Fe-2S]-[ferredoxin] + 2 S-adenosyl-L-methionine = 2-methyladenosine(37) in tRNA + 5'-deoxyadenosine + L-methionine + 2 oxidized [2Fe-2S]-[ferredoxin] + S-adenosyl-L-homocysteine. Its function is as follows. Specifically methylates position 2 of adenine 2503 in 23S rRNA and position 2 of adenine 37 in tRNAs. This chain is Probable dual-specificity RNA methyltransferase RlmN, found in Chlorobium phaeobacteroides (strain DSM 266 / SMG 266 / 2430).